Reading from the N-terminus, the 626-residue chain is Glycosyltransferase 25 family member (626 aa).

Positions 1–21 are cleaved as a signal peptide; the sequence is MLKKQVFYGILLICAFVCIYG. N-linked (GlcNAc...) asparagine glycans are attached at residues N113, N234, N272, and N533. Residues 623 to 626 carry the Prevents secretion from ER motif; that stretch reads HQEL.

Belongs to the glycosyltransferase 25 family.

Its subcellular location is the endoplasmic reticulum lumen. This is Glycosyltransferase 25 family member from Drosophila pseudoobscura pseudoobscura (Fruit fly).